The following is a 379-amino-acid chain: Type II methyltransferase M.CvrRI (379 aa).

The protein belongs to the N(4)/N(6)-methyltransferase family.

The enzyme catalyses a 2'-deoxyadenosine in DNA + S-adenosyl-L-methionine = an N(6)-methyl-2'-deoxyadenosine in DNA + S-adenosyl-L-homocysteine + H(+). Functionally, a gamma subtype methylase, recognizes the double-stranded sequence 5'-TGCA-3', methylates A-4 on both strands, and protects the DNA from cleavage by the CviRI endonuclease. This is Type II methyltransferase M.CvrRI (CVIRIM) from Chlorella (PBCV-XZ-6E).